A 428-amino-acid polypeptide reads, in one-letter code: tRNA(Ile2) 2-agmatinylcytidine synthetase TiaS (428 aa).

The protein belongs to the TiaS family.

The protein localises to the cytoplasm. It catalyses the reaction cytidine(34) in tRNA(Ile2) + agmatine + ATP + H2O = 2-agmatinylcytidine(34) in tRNA(Ile2) + AMP + 2 phosphate + 2 H(+). Functionally, ATP-dependent agmatine transferase that catalyzes the formation of 2-agmatinylcytidine (agm2C) at the wobble position (C34) of tRNA(Ile2), converting the codon specificity from AUG to AUA. This is tRNA(Ile2) 2-agmatinylcytidine synthetase TiaS from Methanosarcina mazei (strain ATCC BAA-159 / DSM 3647 / Goe1 / Go1 / JCM 11833 / OCM 88) (Methanosarcina frisia).